The chain runs to 236 residues: Phosphoribosylaminoimidazole-succinocarboxamide synthase (236 aa).

This sequence belongs to the SAICAR synthetase family.

It catalyses the reaction 5-amino-1-(5-phospho-D-ribosyl)imidazole-4-carboxylate + L-aspartate + ATP = (2S)-2-[5-amino-1-(5-phospho-beta-D-ribosyl)imidazole-4-carboxamido]succinate + ADP + phosphate + 2 H(+). It participates in purine metabolism; IMP biosynthesis via de novo pathway; 5-amino-1-(5-phospho-D-ribosyl)imidazole-4-carboxamide from 5-amino-1-(5-phospho-D-ribosyl)imidazole-4-carboxylate: step 1/2. In Streptococcus equi subsp. zooepidemicus (strain H70), this protein is Phosphoribosylaminoimidazole-succinocarboxamide synthase.